The primary structure comprises 299 residues: Probable lipid kinase YegS (299 aa).

The DAGKc domain occupies 2-133 (ADLPASLLIL…IDIAQVNKET (132 aa)). ATP is bound by residues Thr-40, 66-72 (GDGTINE), and Thr-95. Leu-215, Asp-218, and Leu-220 together coordinate Mg(2+). Glu-271 (proton acceptor) is an active-site residue.

This sequence belongs to the diacylglycerol/lipid kinase family. YegS lipid kinase subfamily. Mg(2+) serves as cofactor. It depends on Ca(2+) as a cofactor.

It is found in the cytoplasm. Probably phosphorylates lipids; the in vivo substrate is unknown. The protein is Probable lipid kinase YegS of Escherichia fergusonii (strain ATCC 35469 / DSM 13698 / CCUG 18766 / IAM 14443 / JCM 21226 / LMG 7866 / NBRC 102419 / NCTC 12128 / CDC 0568-73).